Consider the following 444-residue polypeptide: Methylenetetrahydrofolate--tRNA-(uracil-5-)-methyltransferase TrmFO (444 aa).

10-15 (GAGLAG) contacts FAD.

It belongs to the MnmG family. TrmFO subfamily. It depends on FAD as a cofactor.

It localises to the cytoplasm. It catalyses the reaction uridine(54) in tRNA + (6R)-5,10-methylene-5,6,7,8-tetrahydrofolate + NADH + H(+) = 5-methyluridine(54) in tRNA + (6S)-5,6,7,8-tetrahydrofolate + NAD(+). It carries out the reaction uridine(54) in tRNA + (6R)-5,10-methylene-5,6,7,8-tetrahydrofolate + NADPH + H(+) = 5-methyluridine(54) in tRNA + (6S)-5,6,7,8-tetrahydrofolate + NADP(+). Its function is as follows. Catalyzes the folate-dependent formation of 5-methyl-uridine at position 54 (M-5-U54) in all tRNAs. The protein is Methylenetetrahydrofolate--tRNA-(uracil-5-)-methyltransferase TrmFO of Streptococcus gordonii (strain Challis / ATCC 35105 / BCRC 15272 / CH1 / DL1 / V288).